Reading from the N-terminus, the 216-residue chain is Large ribosomal subunit protein uL1 (216 aa).

Belongs to the universal ribosomal protein uL1 family.

In Oryza sativa subsp. indica (Rice), this protein is Large ribosomal subunit protein uL1.